The primary structure comprises 179 residues: Apolipophorin-3b (179 aa).

Positions 1 to 16 (MNTLLAVLMLAVAAQA) are cleaved as a signal peptide. 12 repeats span residues 30 to 40 (VQQLNHTIVNA), 41 to 52 (AHELHETLGLPT), 53 to 60 (PDEALNLL), 61 to 78 (TEQANAFKTKIAEVTTSL), 79 to 89 (KQEAEKHQGSV), 90 to 99 (AEQLNRFARN), 100 to 113 (LNNSIHDAATSAQP), 114 to 127 (ADQLNSLQSALTNV), 128 to 140 (GHQWQTSQPRPSV), 141 to 151 (AQEAWAPVQSA), 152 to 165 (LQEAAEKTKEAAAN), and 166 to 179 (LQNSIQSAVQKPAN). The N-linked (GlcNAc...) asparagine glycan is linked to Asn-34. N-linked (GlcNAc...) asparagine glycosylation occurs at Asn-101. The interval 152 to 179 (LQEAAEKTKEAAANLQNSIQSAVQKPAN) is disordered. The span at 165–179 (NLQNSIQSAVQKPAN) shows a compositional bias: polar residues.

Belongs to the insect apolipophorin-3 family. Equilibrium between a soluble monomer and a bound lipoprotein form. Apolipophorin-3 associates with lipophorin during lipid loading until each particle contains 14 molecules of apolipophorin-3 in L.migratoria (5 molecules of apolipophorin-3a and 9 of apolipophorin-3b). As to expression, hemolymph.

It localises to the secreted. Its function is as follows. Assists in the loading of diacylglycerol, generated from triacylglycerol stores in the fat body through the action of adipokinetic hormone, into lipophorin, the hemolymph lipoprotein. It increases the lipid carrying capacity of lipophorin by covering the expanding hydrophobic surface resulting from diacylglycerol uptake. It thus plays a critical role in the transport of lipids during flight in several species of insects. The polypeptide is Apolipophorin-3b (Locusta migratoria (Migratory locust)).